The primary structure comprises 921 residues: Probable glucan 1,3-alpha-glucosidase (921 aa).

The signal sequence occupies residues 1–20 (MRSLLFVLSLICFCSQTALS). The active-site Nucleophile is the Asp-512. Glu-515 is an active-site residue. Asp-588 functions as the Proton donor in the catalytic mechanism. N-linked (GlcNAc...) asparagine glycans are attached at residues Asn-689 and Asn-804.

This sequence belongs to the glycosyl hydrolase 31 family. As to quaternary structure, heterodimer of a catalytic alpha subunit (PSL5) and a beta subunit (PSL4). In terms of tissue distribution, expressed in roots, rosette leaves, leaf blades, mature stems, cauline leaves, flower buds, flowers and siliques.

It localises to the endoplasmic reticulum. It catalyses the reaction Hydrolysis of terminal (1-&gt;3)-alpha-D-glucosidic links in (1-&gt;3)-alpha-D-glucans.. The protein operates within glycan metabolism; N-glycan metabolism. Its function is as follows. Cleaves sequentially the 2 innermost alpha-1,3-linked glucose residues from the Glc(2)Man(9)GlcNAc(2) oligosaccharide precursor of immature glycoproteins. Essential for stable accumulation of the receptor EFR that determines the specific perception of bacterial elongation factor Tu (EF-Tu), a potent elicitor of the defense response to pathogen-associated molecular patterns (PAMPs). Required for sustained activation of EFR-mediated signaling, but not receptor FLS2-mediated signaling elicited by the bacterial flagellin flg22. This Arabidopsis thaliana (Mouse-ear cress) protein is Probable glucan 1,3-alpha-glucosidase (PSL5).